Here is a 372-residue protein sequence, read N- to C-terminus: Cyclin-A3-2 (372 aa).

Residues 53 to 73 (NQKKETQKPKRNLKPPPAKQI) are disordered.

The protein belongs to the cyclin family. Cyclin AB subfamily.

The protein is Cyclin-A3-2 (CYCA3-2) of Arabidopsis thaliana (Mouse-ear cress).